Reading from the N-terminus, the 665-residue chain is Protein phosphatase 1 regulatory subunit 21 (665 aa).

Coiled coils occupy residues Met-1–Lys-84, Leu-125–Gln-206, Glu-426–Val-477, and Lys-586–Leu-627.

As to quaternary structure, component of the FERRY complex.

It is found in the early endosome. Functionally, component of the FERRY complex (Five-subunit Endosomal Rab5 and RNA/ribosome intermediary). The FERRY complex directly interacts with mRNAs and RAB5A, and functions as a RAB5A effector involved in the localization and the distribution of specific mRNAs most likely by mediating their endosomal transport. The complex recruits mRNAs and ribosomes to early endosomes through direct mRNA-interaction. Putative regulator of protein phosphatase 1 (PP1) activity. May play a role in the endosomal sorting process or in endosome maturation pathway. This is Protein phosphatase 1 regulatory subunit 21 (ppp1r21) from Danio rerio (Zebrafish).